The following is a 197-amino-acid chain: Endo-1,4-beta-xylanase A (197 aa).

One can recognise a GH11 domain in the interval 1-197 (SGTPSSTGTD…SSGTATITVT (197 aa)). Residue E87 is the Nucleophile of the active site. A disulfide bridge links C111 with C160. The Proton donor role is filled by E184.

It belongs to the glycosyl hydrolase 11 (cellulase G) family.

The protein localises to the secreted. It carries out the reaction Endohydrolysis of (1-&gt;4)-beta-D-xylosidic linkages in xylans.. It functions in the pathway glycan degradation; xylan degradation. Functionally, hydrolyzes xylans into xylobiose and xylose. The chain is Endo-1,4-beta-xylanase A (XYNA) from Schizophyllum commune (Split gill fungus).